Consider the following 467-residue polypeptide: 5'-nucleotidase domain-containing protein 1 (467 aa).

The active-site Nucleophile is the Asp16. Residues Asp16 and Asp18 each coordinate Mg(2+). Asp18 functions as the Proton donor in the catalytic mechanism. N6-acetyllysine is present on Lys181. Asp323 serves as a coordination point for Mg(2+).

The protein belongs to the 5'(3')-deoxyribonucleotidase family.

The protein is 5'-nucleotidase domain-containing protein 1 (Nt5dc1) of Mus musculus (Mouse).